The chain runs to 475 residues: UDP-N-acetylmuramate--L-alanine ligase (475 aa).

121 to 127 contributes to the ATP binding site; the sequence is GTHGKTT.

Belongs to the MurCDEF family.

The protein resides in the cytoplasm. It carries out the reaction UDP-N-acetyl-alpha-D-muramate + L-alanine + ATP = UDP-N-acetyl-alpha-D-muramoyl-L-alanine + ADP + phosphate + H(+). The protein operates within cell wall biogenesis; peptidoglycan biosynthesis. Functionally, cell wall formation. The chain is UDP-N-acetylmuramate--L-alanine ligase from Salinibacter ruber (strain DSM 13855 / M31).